The chain runs to 54 residues: MAVPKKRTSISKKRIRKNIWKSKGRRAALKAFSLAKSLSTGNSKSFWGDKSNKY.

Belongs to the bacterial ribosomal protein bL32 family.

It is found in the plastid. It localises to the chloroplast. This is Large ribosomal subunit protein bL32c from Cucumis sativus (Cucumber).